A 344-amino-acid polypeptide reads, in one-letter code: GTP 3',8-cyclase (344 aa).

Positions 19–245 (PFGRAVTYLR…DIPYRTGGPA (227 aa)) constitute a Radical SAM core domain. GTP is bound at residue arginine 28. Residues cysteine 35 and cysteine 39 each contribute to the [4Fe-4S] cluster site. An S-adenosyl-L-methionine-binding site is contributed by tyrosine 41. Position 42 (cysteine 42) interacts with [4Fe-4S] cluster. Position 77 (arginine 77) interacts with GTP. Glycine 81 is an S-adenosyl-L-methionine binding site. Residue threonine 111 participates in GTP binding. Residue serine 135 coordinates S-adenosyl-L-methionine. Position 171 (lysine 171) interacts with GTP. Methionine 205 lines the S-adenosyl-L-methionine pocket. 2 residues coordinate [4Fe-4S] cluster: cysteine 268 and cysteine 271. 273 to 275 (RVR) lines the GTP pocket. Cysteine 285 contacts [4Fe-4S] cluster.

The protein belongs to the radical SAM superfamily. MoaA family. Monomer and homodimer. Requires [4Fe-4S] cluster as cofactor.

The enzyme catalyses GTP + AH2 + S-adenosyl-L-methionine = (8S)-3',8-cyclo-7,8-dihydroguanosine 5'-triphosphate + 5'-deoxyadenosine + L-methionine + A + H(+). It functions in the pathway cofactor biosynthesis; molybdopterin biosynthesis. Catalyzes the cyclization of GTP to (8S)-3',8-cyclo-7,8-dihydroguanosine 5'-triphosphate. The sequence is that of GTP 3',8-cyclase from Brucella ovis (strain ATCC 25840 / 63/290 / NCTC 10512).